The primary structure comprises 414 residues: COUP transcription factor 2 (414 aa).

The interval 1-72 is disordered; sequence MAMVVSTWRD…PGGPGSDKQQ (72 aa). Over residues 27–37 the composition is skewed to pro residues; sequence PPVPGPPPGAP. Over residues 38-54 the composition is skewed to low complexity; the sequence is HTPQTPGQGGPASTPAQ. The residue at position 51 (Thr-51) is a Phosphothreonine. The nuclear receptor DNA-binding region spans 76-151; it reads HIECVVCGDK…VGMRREAVQR (76 aa). 2 consecutive NR C4-type zinc fingers follow at residues 79-99 and 115-139; these read CVVC…CEGC and CRAN…LKKC. Residues 117-414 are interaction with ZFPM2; sequence ANRNCPIDQH…SFNWPYMAIQ (298 aa). Residues 177–403 form the NR LBD domain; it reads YLSGYISLLL…TLIRDMLLSG (227 aa). Positions 337-414 are important for dimerization; sequence LQEKSQCALE…SFNWPYMAIQ (78 aa).

It belongs to the nuclear hormone receptor family. NR2 subfamily. As to quaternary structure, interacts with SQSTM1. Binds DNA as a dimer; homodimer or heterodimer with NR2F6. Interacts with NCOA1, NCOA2, NCOA3 and PPARGC1A. Interacts with ZFPM2.

It localises to the nucleus. In terms of biological role, ligand-activated transcription factor. Activated by high concentrations of 9-cis-retinoic acid and all-trans-retinoic acid, but not by dexamethasone, cortisol or progesterone (in vitro). Regulation of the apolipoprotein A-I gene transcription. Binds to DNA site A. May be required to establish ovary identity during early gonad development. In Rattus norvegicus (Rat), this protein is COUP transcription factor 2 (Nr2f2).